The following is a 589-amino-acid chain: Protein drl-1 (589 aa).

Residues methionine 1–threonine 51 are disordered. The segment covering isoleucine 20–aspartate 41 has biased composition (acidic residues). In terms of domain architecture, Protein kinase spans tryptophan 97–lysine 373. Helical transmembrane passes span glycine 429 to valine 449, leucine 456 to isoleucine 476, and glycine 491 to cysteine 511.

This sequence belongs to the protein kinase superfamily. STE Ser/Thr protein kinase family. In terms of tissue distribution, expressed in vulval and body wall muscles, hypodermis, seam cells and tissues next to pharynx and anus.

The protein localises to the membrane. Functionally, negatively regulates lifespan and health span probably by participating in nutrient sensing. The sequence is that of Protein drl-1 from Caenorhabditis elegans.